The sequence spans 3174 residues: MVFESVVVDVLNRFLGDYVVDLDTSQLSLGIWKGAVALKNLQIKENALSQLDVPFKVKVGHIGNLKLIIPWKNLYTQPVEAVLEEIYLLIVPSSRIKYDPLKEEKQLMEAKQQELKRIEEAKQKVVDQEQHLPEKQDTFAEKLVTQIIKNLQVKISSIHIRYEDDITNRDKPLSFGISLQNLSMQTTDQYWVPCLHDETEKLVRKLIRLDNLFAYWNVKSQMFYLSDYDNSLDDLKNGIVNENIVPEGYDFVFRPISANAKLVMNRRSDFDFSAPKINLEIELHNIAIEFNKPQYFSIMELLESVDMMAQNLPYRKFKPDVPLHHHAREWWAYAIHGVLEVNVCPRLWMWSWKHIRKHRQKVKQYKELYKKKLTSKKPPGELLVSLEELEKTLDVFNITIARQTAEVEVKKAGYKIYKEGVKDPEDNKGWFSWLWSWSEQNTNEQQPDVQPETLEEMLTPEEKALLYEAIGYSETAVDPTLLKTFEALKFFVHLKSMSIVLRENHQKPELVDIVIEEFSTLIVQRPGAQAIKFETKIDSFHITGLPDNSEKPRLLSSLDDAMSLFQITFEINPLDETVSQRCIIEAEPLEIIYDARTVNSIVEFFRPPKEVHLAQLTAATLTKLEEFRSKTATGLLYIIETQKVLDLKINLKASYIIVPQDGIFSPTSNLLLLDLGHLKVTSKSRSELPDVKQGEANLKEIMDRAYDSFDIQLTSVQLLYSRVGDNWREARKLSVSTQHILVPMHFNLELSKAMVFMDVRMPKFKIYGKLPLISLRISDKKLQGIMELIESIPKPEPVTEVSAPVKSFQIQTSTSLGTSQISQKIIPLLELPSVSEDDSEEEFFDAPCSPLEEPLQFPTGVKSIRTRKLQKQDCSVNMTTFKIRFEVPKVLIEFYHLVGDCELSVVEILVLGLGAEIEIRTYDLKANAFLKEFCLKCPEYLDENKKPVYLVTTLDNTMEDLLTLEYVKAEKNVPDLKSTYNNVLQLIKVNFSSLDIHLHTEALLNTINYLHNILPQSEEKSAPVSTTETEDKGDVIKKLALKLSTNEDIITLQILAELSCLQIFIQDQKCNISEIKIEGLDSEMIMRPSETEINAKLRNIIVLDSDITAIYKKAVYITGKEVFSFKMVSYMDATAGSAYTDMNVVDIQVNLIVGCIEVVFVTKFLYSILAFIDNFQAAKQALAEATVQAAGMAATGVKELAQRSSRMALDINIKAPVVVIPQSPVSENVFVADFGLITMTNTFHMITESQSSPPPVIDLITIKLSEMRLYRSRFINDAYQEVLDLLLPLNLEVVVERNLCWEWYQEVPCFNVNAQLKPMEFILSQEDITTIFKTLHGNIWYEKDGSASPAVTKDQYSATSGVTTNASHHSGGATVVTAAVVEVHSRALLVKTTLNISFKTDDLTMVLYSPGPKQASFTDVRDPSLKLAEFKLENIISTLKMYTDGSTFSSFSLKNCILDDKRPHVKKATPRMIGLTVGFDKKDMMDIKYRKVRDGCVTDAVFQEMYICASVEFLQTVANVFLEAYTTGTAVETSVQTWTAKEEVPTQESVKWEINVIIKNPEIVFVADMTKNDAPALVITTQCEICYKGNLENSTMTAAIKDLQVRACPFLPVKRKGKITTVLQPCDLFYQTTQKGTDPQVIDMSVKSLTLKVSPVIINTMITITSALYTTKETIPEETASSTAHLWEKKDTKTLKMWFLEESNETEKIAPTTELVPKGEMIKMNIDSIFIVLEAGIGHRTVPMLLAKSRFSGEGKNWSSLINLHCQLELEVHYYNEMFGVWEPLLEPLEIDQTEDFRPWNLGIKMKKKAKMAIVESDPEEENYKVPEYKTVISFHSKDQLNITLSKCGLVMLNNLVKAFTEAATGSSADFVKDLAPFMILNSLGLTISVSPSDSFSVLNIPMAKSYVLKNGESLSMDYIRTKDNDHFNAMTSLSSKLFFILLTPVNHSTADKIPLTKVGRRLYTVRHRESGVERSIVCQIDTVEGSKKVTIRSPVQIRNHFSVPLSVYEGDTLLGTASPENEFNIPLGSYRSFIFLKPEDENYQMCEGIDFEEIIKNDGALLKKKCRSKNPSKESFLINIVPEKDNLTSLSVYSEDGWDLPYIMHLWPPILLRNLLPYKIAYYIEGIENSVFTLSEGHSAQICTAQLGKARLHLKLLDYLNHDWKSEYHIKPNQQDISFVSFTCVTEMEKTDLDIAVHMTYNTGQTVVAFHSPYWMVNKTGRMLQYKADGIHRKHPPNYKKPVLFSFQPNHFFNNNKVQLMVTDSELSNQFSIDTVGSHGAVKCKGLKMDYQVGVTIDLSSFNITRIVTFTPFYMIKNKSKYHISVAEEGNDKWLSLDLEQCIPFWPEYASSKLLIQVERSEDPPKRIYFNKQENCILLRLDNELGGIIAEVNLAEHSTVITFLDYHDGAATFLLINHTKNELVQYNQSSLSEIEDSLPPGKAVFYTWADPVGSRRLKWRCRKSHGEVTQKDDMMMPIDLGEKTIYLVSFFEGLQRIILFTEDPRVFKVTYESEKAELAEQEIAVALQDVGISLVNNYTKQEVAYIGITSSDVVWETKPKKKARWKPMSVKHTEKLEREFKEYTESSPSEDKVIQLDTNVPVRLTPTGHNMKILQPHVIALRRNYLPALKVEYNTSAHQSSFRIQIYRIQIQNQIHGAVFPFVFYPVKPPKSVTMDSAPKPFTDVSIVMRSAGHSQISRIKYFKVLIQEMDLRLDLGFIYALTDLMTEAEVTENTEVELFHKDIEAFKEEYKTASLVDQSQVSLYEYFHISPIKLHLSVSLSSGREEAKDSKQNGGLIPVHSLNLLLKSIGATLTDVQDVVFKLAFFELNYQFHTTSDLQSEVIRHYSKQAIKQMYVLILGLDVLGNPFGLIREFSEGVEAFFYEPYQGAIQGPEEFVEGMALGLKALVGGAVGGLAGAASKITGAMAKGVAAMTMDEDYQQKRREAMNKQPAGFREGITRGGKGLVSGFVSGITGIVTKPIKGAQKGGAAGFFKGVGKGLVGAVARPTGGIIDMASSTFQGIKRATETSEVESLRPPRFFNEDGVIRPYRLRDGTGNQMLQVMENGRFAKYKYFTHVMINKTDMLMITRRGVLFVTKGTFGQLTCEWQYSFDEFTKEPFIVHGRRLRIEAKERVKSVFHAREFGKIINFKTPEDARWILTKLQEAREPSPSL.

In terms of domain architecture, Chorein N-terminal spans 3–116; the sequence is FESVVVDVLN…LMEAKQQELK (114 aa). TPR repeat units follow at residues 212–245, 373–406, and 537–575; these read LFAY…ENIV, LTSK…QTAE, and IDSF…NPLD. Position 839 is a phosphoserine (serine 839). The FFAT motif lies at 842–848; that stretch reads EFFDAPC. 2 TPR repeats span residues 1256-1289 and 1291-1320; these read VIDL…LLPL and LEVV…KPME. The residue at position 1416 (serine 1416) is a Phosphoserine. One copy of the TPR 6 repeat lies at 2009–2041; sequence YEGDTLLGTASPENEFNIPLGSYRSFIFLKPED. Residues 2209-2454 enclose the SHR-BD domain; it reads VAFHSPYWMV…VFYTWADPVG (246 aa). TPR repeat units lie at residues 2568–2601, 2717–2751, and 2860–2898; these read PMSV…DTNV, LGFI…FKEE, and ILGL…PEEF. The interval 2751–3174 is required for mitochondrial localization; that stretch reads EYKTASLVDQ…QEAREPSPSL (424 aa). Positions 2953–3027 are required for lipid droplet localization; that stretch reads PAGFREGITR…SSTFQGIKRA (75 aa). The TPR 10 repeat unit spans residues 3086–3119; it reads MLMITRRGVLFVTKGTFGQLTCEWQYSFDEFTKE.

Belongs to the VPS13 family. Interacts (via FFAT motif) with VAPA and VAPB. Interacts with RAB7A. Interacts with XK. As to expression, expressed in red blood cells (at protein level). Widely expressed, with high expression in brain, heart, skeletal muscle and kidney.

It is found in the mitochondrion outer membrane. The protein resides in the endoplasmic reticulum membrane. The protein localises to the endosome membrane. Its subcellular location is the lysosome membrane. It localises to the lipid droplet. It is found in the golgi apparatus. The protein resides in the cytoplasmic vesicle. The protein localises to the secretory vesicle. Its subcellular location is the neuronal dense core vesicle. Its function is as follows. Mediates the transfer of lipids between membranes at organelle contact sites. Binds phospholipids. Required for the formation or stabilization of ER-mitochondria contact sites which enable transfer of lipids between the ER and mitochondria. Negatively regulates lipid droplet size and motility. Required for efficient lysosomal protein degradation. The sequence is that of Intermembrane lipid transfer protein VPS13A (VPS13A) from Homo sapiens (Human).